A 501-amino-acid polypeptide reads, in one-letter code: Lysine--tRNA ligase (501 aa).

Mg(2+) contacts are provided by E411 and E418.

This sequence belongs to the class-II aminoacyl-tRNA synthetase family. Homodimer. Requires Mg(2+) as cofactor.

Its subcellular location is the cytoplasm. It carries out the reaction tRNA(Lys) + L-lysine + ATP = L-lysyl-tRNA(Lys) + AMP + diphosphate. The protein is Lysine--tRNA ligase of Clostridium perfringens (strain ATCC 13124 / DSM 756 / JCM 1290 / NCIMB 6125 / NCTC 8237 / Type A).